The sequence spans 40 residues: Photosystem II reaction center protein J (40 aa).

The helical transmembrane segment at 8–28 (IPLWMIGTLAGILVISLIGIF) threads the bilayer.

Belongs to the PsbJ family. PSII is composed of 1 copy each of membrane proteins PsbA, PsbB, PsbC, PsbD, PsbE, PsbF, PsbH, PsbI, PsbJ, PsbK, PsbL, PsbM, PsbT, PsbX, PsbY, PsbZ, Psb30/Ycf12, at least 3 peripheral proteins of the oxygen-evolving complex and a large number of cofactors. It forms dimeric complexes.

Its subcellular location is the plastid membrane. Its function is as follows. One of the components of the core complex of photosystem II (PSII). PSII is a light-driven water:plastoquinone oxidoreductase that uses light energy to abstract electrons from H(2)O, generating O(2) and a proton gradient subsequently used for ATP formation. It consists of a core antenna complex that captures photons, and an electron transfer chain that converts photonic excitation into a charge separation. The protein is Photosystem II reaction center protein J of Cuscuta gronovii (Common dodder).